We begin with the raw amino-acid sequence, 224 residues long: MTKKICIAIDGPAAAGKSTVAKIVAKKLRFVYIDTGAMYRAVTYIAQKNNLAYEDETAIAQLLQKTVIRFEPGEVQQVFINDENVTEVIRSLEVTNHVSIVAAHPAIREALQERQQIFATEGGIVMDGRDIGTAVLPNAELKIFLLASVEERAERRFKENVAKGFAGDLNQLKKEIEERDHLDYTREHSPLKKAEDAIEVDTTSMSIEEVANKILSLAEQKINN.

11–19 (GPAAAGKST) provides a ligand contact to ATP.

This sequence belongs to the cytidylate kinase family. Type 1 subfamily.

The protein resides in the cytoplasm. It carries out the reaction CMP + ATP = CDP + ADP. The catalysed reaction is dCMP + ATP = dCDP + ADP. This chain is Cytidylate kinase, found in Listeria welshimeri serovar 6b (strain ATCC 35897 / DSM 20650 / CCUG 15529 / CIP 8149 / NCTC 11857 / SLCC 5334 / V8).